We begin with the raw amino-acid sequence, 172 residues long: Large ribosomal subunit protein uL10 (172 aa).

This sequence belongs to the universal ribosomal protein uL10 family. As to quaternary structure, part of the ribosomal stalk of the 50S ribosomal subunit. The N-terminus interacts with L11 and the large rRNA to form the base of the stalk. The C-terminus forms an elongated spine to which L12 dimers bind in a sequential fashion forming a multimeric L10(L12)X complex.

Its function is as follows. Forms part of the ribosomal stalk, playing a central role in the interaction of the ribosome with GTP-bound translation factors. This chain is Large ribosomal subunit protein uL10, found in Rhodopseudomonas palustris (strain BisB5).